The chain runs to 326 residues: N-acetyl-gamma-glutamyl-phosphate reductase (326 aa).

The active site involves Cys-155.

Belongs to the NAGSA dehydrogenase family. Type 1 subfamily.

It is found in the cytoplasm. The enzyme catalyses N-acetyl-L-glutamate 5-semialdehyde + phosphate + NADP(+) = N-acetyl-L-glutamyl 5-phosphate + NADPH + H(+). It participates in amino-acid biosynthesis; L-arginine biosynthesis; N(2)-acetyl-L-ornithine from L-glutamate: step 3/4. Functionally, catalyzes the NADPH-dependent reduction of N-acetyl-5-glutamyl phosphate to yield N-acetyl-L-glutamate 5-semialdehyde. This is N-acetyl-gamma-glutamyl-phosphate reductase from Shewanella woodyi (strain ATCC 51908 / MS32).